We begin with the raw amino-acid sequence, 95 residues long: Cobalt transport protein CbiN (95 aa).

2 helical membrane passes run 7 to 27 (IMLIAVAVIAIAPLVIYSGLG) and 67 to 87 (LLFALQAAIGALIIGYVFGYY).

This sequence belongs to the CbiN family. Forms an energy-coupling factor (ECF) transporter complex composed of an ATP-binding protein (A component, CbiO), a transmembrane protein (T component, CbiQ) and 2 possible substrate-capture proteins (S components, CbiM and CbiN) of unknown stoichimetry.

It localises to the cell membrane. Its pathway is cofactor biosynthesis; adenosylcobalamin biosynthesis. Its function is as follows. Part of the energy-coupling factor (ECF) transporter complex CbiMNOQ involved in cobalt import. This is Cobalt transport protein CbiN from Methanothermobacter marburgensis (strain ATCC BAA-927 / DSM 2133 / JCM 14651 / NBRC 100331 / OCM 82 / Marburg) (Methanobacterium thermoautotrophicum).